The primary structure comprises 481 residues: Hyaluronidase-4 (481 aa).

Topologically, residues 1-11 (MQLLPEGQLRL) are cytoplasmic. The helical transmembrane segment at 12–32 (CVFQPVHLTSGLLILFILKSI) threads the bilayer. The Extracellular segment spans residues 33 to 455 (SSLKPARLPV…CREMTEASGP (423 aa)). 5 disulfide bridges follow: Cys-59–Cys-351, Cys-223–Cys-237, Cys-376–Cys-387, Cys-381–Cys-435, and Cys-437–Cys-446. N-linked (GlcNAc...) asparagine glycans are attached at residues Asn-64 and Asn-115. Residue Glu-147 is the Proton donor of the active site. Residues Asn-232 and Asn-343 are each glycosylated (N-linked (GlcNAc...) asparagine). Residues 456–476 (SGLSLSSSSVITLCLLVLAGY) traverse the membrane as a helical segment. Over 477 to 481 (QSIQL) the chain is Cytoplasmic.

This sequence belongs to the glycosyl hydrolase 56 family.

It localises to the membrane. The enzyme catalyses Random hydrolysis of (1-&gt;4)-linkages between N-acetyl-beta-D-glucosamine and D-glucuronate residues in hyaluronate.. Its function is as follows. Endo-hyaluronidase that degrades hyaluronan to smaller oligosaccharide fragments. Also has chondroitin sulfate hydrolase activity, The best substrate being the galactosaminidic linkage in the sequence of a trisulfated tetrasaccharide. The sequence is that of Hyaluronidase-4 (Hyal4) from Mus musculus (Mouse).